The primary structure comprises 291 residues: Phosphatidylcholine-sterol acyltransferase (291 aa).

The N-linked (GlcNAc...) asparagine glycan is linked to N28. S125 serves as the catalytic Nucleophile. N179 carries an N-linked (GlcNAc...) asparagine glycan. A disulfide bridge connects residues C220 and C263. The active-site Charge relay system is the D252. A glycan (N-linked (GlcNAc...) asparagine) is linked at N280.

The protein belongs to the AB hydrolase superfamily. Lipase family.

The protein resides in the secreted. It catalyses the reaction a sterol + a 1,2-diacyl-sn-glycero-3-phosphocholine = a sterol ester + a 1-acyl-sn-glycero-3-phosphocholine. With respect to regulation, APOA1 is the most potent activator in plasma. Also activated by APOE, APOC1 and APOA4. Central enzyme in the extracellular metabolism of plasma lipoproteins. Synthesized mainly in the liver and secreted into plasma where it converts cholesterol and phosphatidylcholines (lecithins) to cholesteryl esters and lysophosphatidylcholines on the surface of high and low density lipoproteins (HDLs and LDLs). The cholesterol ester is then transported back to the liver. Has a preference for plasma 16:0-18:2 or 18:O-18:2 phosphatidylcholines. Also produced in the brain by primary astrocytes, and esterifies free cholesterol on nascent APOE-containing lipoproteins secreted from glia and influences cerebral spinal fluid (CSF) APOE- and APOA1 levels. Together with APOE and the cholesterol transporter ABCA1, plays a key role in the maturation of glial-derived, nascent lipoproteins. Required for remodeling high-density lipoprotein particles into their spherical forms. This Myodes glareolus (Bank vole) protein is Phosphatidylcholine-sterol acyltransferase (LCAT).